A 116-amino-acid polypeptide reads, in one-letter code: Large ribosomal subunit protein bL17 (116 aa).

This sequence belongs to the bacterial ribosomal protein bL17 family. Part of the 50S ribosomal subunit. Contacts protein L32.

This is Large ribosomal subunit protein bL17 from Dictyoglomus thermophilum (strain ATCC 35947 / DSM 3960 / H-6-12).